Reading from the N-terminus, the 468-residue chain is Glucose-dependent insulinotropic receptor (468 aa).

Residues 1–6 (MESSFS) lie on the Extracellular side of the membrane. A helical transmembrane segment spans residues 7–27 (FGVILAVLTILIIAVNALVVV). Residues 28–37 (AMLLSIYKND) are Cytoplasmic-facing. Residues 38–58 (GVGLCFTLNLAVADTLIGVAI) form a helical membrane-spanning segment. The Extracellular portion of the chain corresponds to 59–81 (SGLVTDQLSSSAQHTQKTLCSLR). A helical membrane pass occupies residues 82–102 (MAFVTSSAAASVLTVMLIAFD). At 103-125 (RYLAIKQPLRYFQIMNGLVAGGC) the chain is on the cytoplasmic side. A helical transmembrane segment spans residues 126-146 (IAGLWLISYLIGFLPLGVSIF). Residues 147–164 (QQTTYHGPCTFFAVFHPR) lie on the Extracellular side of the membrane. Residues 165–185 (FVLTLSCAGFFPAVLLFVFFY) form a helical membrane-spanning segment. Topologically, residues 186-226 (CDMLKIASVHSQHIRKMEHAGAMVGACRPPRPVNDFKAVRT) are cytoplasmic. The helical transmembrane segment at 227–247 (VSVLIGSFTLSWSPFLITSIV) threads the bilayer. The Extracellular portion of the chain corresponds to 248–262 (QVACHKCCLYQVLEK). A helical membrane pass occupies residues 263 to 283 (YLWLLGVGNSLLNPLIYAYWQ). Topologically, residues 284–468 (REVRQQLCHM…MSDPLRTCRG (185 aa)) are cytoplasmic.

This sequence belongs to the G-protein coupled receptor 1 family. Expression restricted to the beta-cells of pancreatic islets.

Its subcellular location is the cell membrane. Its function is as follows. Receptor for the endogenous fatty-acid ethanolamide oleoylethanolamide (OEA) and lysophosphatidylcholine (LPC). Functions as a glucose-dependent insulinotropic receptor. The activity of this receptor is mediated by G proteins which activate adenylate cyclase. Seems to act through a G(s) mediated pathway. This Rattus norvegicus (Rat) protein is Glucose-dependent insulinotropic receptor (Gpr119).